The following is a 497-amino-acid chain: Galactose-1-phosphate uridylyltransferase (497 aa).

This sequence belongs to the galactose-1-phosphate uridylyltransferase type 2 family.

It localises to the cytoplasm. It catalyses the reaction alpha-D-galactose 1-phosphate + UDP-alpha-D-glucose = alpha-D-glucose 1-phosphate + UDP-alpha-D-galactose. It participates in carbohydrate metabolism; galactose metabolism. The chain is Galactose-1-phosphate uridylyltransferase from Clostridium acetobutylicum (strain ATCC 824 / DSM 792 / JCM 1419 / IAM 19013 / LMG 5710 / NBRC 13948 / NRRL B-527 / VKM B-1787 / 2291 / W).